The primary structure comprises 190 residues: UPF0301 protein Rmet_2743 (190 aa).

The protein belongs to the UPF0301 (AlgH) family.

The polypeptide is UPF0301 protein Rmet_2743 (Cupriavidus metallidurans (strain ATCC 43123 / DSM 2839 / NBRC 102507 / CH34) (Ralstonia metallidurans)).